The following is a 508-amino-acid chain: Flavonoid 3'-monooxygenase CYP75B137 (508 aa).

The chain crosses the membrane as a helical span at residues 2 to 22; it reads LTFFFLWISTLLLSSFIVYLL. Residue C445 participates in heme binding.

This sequence belongs to the cytochrome P450 family. Heme is required as a cofactor. As to expression, expressed in young cromes.

Its subcellular location is the membrane. The catalysed reaction is a 3'-unsubstituted flavone + reduced [NADPH--hemoprotein reductase] + O2 = a 3'-hydroxyflavone + oxidized [NADPH--hemoprotein reductase] + H2O + H(+). The enzyme catalyses (2S)-naringenin + reduced [NADPH--hemoprotein reductase] + O2 = (S)-eriodictyol + oxidized [NADPH--hemoprotein reductase] + H2O + H(+). It catalyses the reaction (2R,3R)-dihydrokaempferol + reduced [NADPH--hemoprotein reductase] + O2 = (2R,3R)-dihydroquercetin + oxidized [NADPH--hemoprotein reductase] + H2O + H(+). It carries out the reaction kaempferol + reduced [NADPH--hemoprotein reductase] + O2 = quercetin + oxidized [NADPH--hemoprotein reductase] + H2O + H(+). Its pathway is flavonoid metabolism. In terms of biological role, flavonoid 3'-hydroxylase that catalyzes the 3'-hydroxylation of flavanones, dihydroflavonols and flavonols. Converts narigenin to eriodictyol, dihydrokaempferol to dihydroquercetin and kaempferol to quercetin. In Crocosmia x crocosmiiflora (Montbretia), this protein is Flavonoid 3'-monooxygenase CYP75B137.